The sequence spans 229 residues: Ribosomal RNA small subunit methyltransferase G (229 aa).

S-adenosyl-L-methionine contacts are provided by residues G87, L92, 138–139, and R154; that span reads VE.

This sequence belongs to the methyltransferase superfamily. RNA methyltransferase RsmG family.

The protein resides in the cytoplasm. The catalysed reaction is guanosine(527) in 16S rRNA + S-adenosyl-L-methionine = N(7)-methylguanosine(527) in 16S rRNA + S-adenosyl-L-homocysteine. In terms of biological role, specifically methylates the N7 position of guanine in position 527 of 16S rRNA. This is Ribosomal RNA small subunit methyltransferase G from Oleidesulfovibrio alaskensis (strain ATCC BAA-1058 / DSM 17464 / G20) (Desulfovibrio alaskensis).